Reading from the N-terminus, the 196-residue chain is Ribosome maturation factor RimP (196 aa).

Residues 176 to 196 are disordered; the sequence is ETNFDEVSTELETDTPSEGDQ. The segment covering 177 to 196 has biased composition (acidic residues); sequence TNFDEVSTELETDTPSEGDQ.

The protein belongs to the RimP family.

The protein resides in the cytoplasm. In terms of biological role, required for maturation of 30S ribosomal subunits. The sequence is that of Ribosome maturation factor RimP from Roseobacter denitrificans (strain ATCC 33942 / OCh 114) (Erythrobacter sp. (strain OCh 114)).